A 234-amino-acid chain; its full sequence is Small ribosomal subunit protein uS5 (234 aa).

Over residues 1 to 10 (MEDIKTTTPE) the composition is skewed to polar residues. The tract at residues 1–69 (MEDIKTTTPE…KDGSGNKPNK (69 aa)) is disordered. Basic and acidic residues predominate over residues 11–31 (VKNEENKTSEVKEGKALEKNN). The S5 DRBM domain maps to 78–141 (LEEKIVGVKK…KSAKNNMYKV (64 aa)).

Belongs to the universal ribosomal protein uS5 family. Part of the 30S ribosomal subunit. Contacts proteins S4 and S8.

In terms of biological role, with S4 and S12 plays an important role in translational accuracy. Its function is as follows. Located at the back of the 30S subunit body where it stabilizes the conformation of the head with respect to the body. The chain is Small ribosomal subunit protein uS5 from Malacoplasma penetrans (strain HF-2) (Mycoplasma penetrans).